A 107-amino-acid polypeptide reads, in one-letter code: FK506-binding protein 1 (107 aa).

One can recognise a PPIase FKBP-type domain in the interval 19 to 107 (GSNVTVHHAG…VFEVELITFK (89 aa)).

The protein belongs to the FKBP-type PPIase family.

The enzyme catalyses [protein]-peptidylproline (omega=180) = [protein]-peptidylproline (omega=0). Its activity is regulated as follows. Inhibited by both FK506 and rapamycin. Its function is as follows. PPIases accelerate the folding of proteins by catalyzing the cis-trans isomerization of proline imidic peptide bonds in oligopeptides. This Dictyostelium discoideum (Social amoeba) protein is FK506-binding protein 1 (fkbp1).